The following is a 276-amino-acid chain: tRNA dimethylallyltransferase (276 aa).

The interval 9-12 (DSLS) is interaction with substrate tRNA.

This sequence belongs to the IPP transferase family. As to quaternary structure, monomer. The cofactor is Mg(2+).

The enzyme catalyses adenosine(37) in tRNA + dimethylallyl diphosphate = N(6)-dimethylallyladenosine(37) in tRNA + diphosphate. Functionally, catalyzes the transfer of a dimethylallyl group onto the adenine at position 37 in tRNAs that read codons beginning with uridine, leading to the formation of N6-(dimethylallyl)adenosine (i(6)A). The sequence is that of tRNA dimethylallyltransferase (miaA) from Helicobacter pylori (strain HPAG1).